We begin with the raw amino-acid sequence, 159 residues long: Large ribosomal subunit protein mL50 (159 aa).

The protein belongs to the mitochondrion-specific ribosomal protein mL50 family. In terms of assembly, component of the mitochondrial ribosome large subunit (39S) which comprises a 16S rRNA and about 50 distinct proteins.

The protein resides in the mitochondrion. This is Large ribosomal subunit protein mL50 (MRPL50) from Bos taurus (Bovine).